The following is a 291-amino-acid chain: Verruculogen synthase (291 aa).

Residue Y68 is part of the active site.

Belongs to the PhyH family. In terms of assembly, homodimer. The cofactor is Fe cation.

It catalyses the reaction fumitremorgin B + 2-oxoglutarate + AH2 + 2 O2 = verruculogen + succinate + A + CO2 + H2O. Its pathway is mycotoxin biosynthesis. Verruculogen synthase; part of the gene cluster that mediates the biosynthesis of fumitremorgins, indole alkaloids that carry not only intriguing chemical structures, but also interesting biological and pharmacological activities. The biosynthesis of fumitremorgin-type alkaloids begins by condensation of the two amino acids L-tryptophan and L-proline to brevianamide F, catalyzed by the non-ribosomal peptide synthetase ftmA. Brevianamide F is then prenylated by the prenyltransferase ftmPT1/ftmB in the presence of dimethylallyl diphosphate, resulting in the formation of tryprostatin B. The three cytochrome P450 monooxygenases, ftmP450-1/ftmC, ftmP450-2/ftmE and ftmP450-3/FtmG, are responsible for the conversion of tryprostatin B to 6-hydroxytryprostatin B, tryprostatin A to fumitremorgin C and fumitremorgin C to 12,13-dihydroxyfumitremorgin C, respectively. The putative methyltransferase ftmMT/ftmD is expected for the conversion of 6-hydroxytryprostatin B to tryprostatin A. FtmPT2/FtmH catalyzes the prenylation of 12,13-dihydroxyfumitre-morgin C in the presence of dimethylallyl diphosphate, resulting in the formation of fumitremorgin B. Fumitremorgin B is further converted to verruculogen by ftmOx1/ftmF via the insertion of an endoperoxide bond between the two prenyl moieties. In some fungal species, verruculogen is further converted to fumitremorgin A, but the enzymes involved in this step have not been identified yet. This is Verruculogen synthase from Aspergillus fumigatus (strain ATCC MYA-4609 / CBS 101355 / FGSC A1100 / Af293) (Neosartorya fumigata).